Here is an 83-residue protein sequence, read N- to C-terminus: Evasin P1124 (83 aa).

A signal peptide spans 1–28 (MAVNVFTILQLAVFAAIVLNVNLHSVSA). Intrachain disulfides connect cysteine 48–cysteine 66, cysteine 52–cysteine 68, and cysteine 62–cysteine 79. An N-linked (GlcNAc...) asparagine glycan is attached at asparagine 51.

It localises to the secreted. Functionally, salivary chemokine-binding protein which binds to host chemokines CXCL1, CXCL2, CXCL3, CXCL5, CXCL6, CXCL12 and CXCL13. This Ixodes ricinus (Common tick) protein is Evasin P1124.